The sequence spans 494 residues: 3-octaprenyl-4-hydroxybenzoate carboxy-lyase (494 aa).

Mn(2+) is bound at residue Asn172. Residues 175–177 (IYR), 189–191 (RWL), and 194–195 (RG) contribute to the prenylated FMN site. Glu238 serves as a coordination point for Mn(2+). Asp294 (proton donor) is an active-site residue.

This sequence belongs to the UbiD family. Homohexamer. It depends on prenylated FMN as a cofactor. Requires Mn(2+) as cofactor.

It localises to the cell membrane. It catalyses the reaction a 4-hydroxy-3-(all-trans-polyprenyl)benzoate + H(+) = a 2-(all-trans-polyprenyl)phenol + CO2. The protein operates within cofactor biosynthesis; ubiquinone biosynthesis. Its function is as follows. Catalyzes the decarboxylation of 3-octaprenyl-4-hydroxy benzoate to 2-octaprenylphenol, an intermediate step in ubiquinone biosynthesis. This Janthinobacterium sp. (strain Marseille) (Minibacterium massiliensis) protein is 3-octaprenyl-4-hydroxybenzoate carboxy-lyase.